The chain runs to 887 residues: 3-hydroxy-3-methylglutaryl-coenzyme A reductase (887 aa).

At 1–9 (MLSRLFRMH) the chain is on the cytoplasmic side. A helical transmembrane segment spans residues 10 to 39 (GLFVASHPWEVIVGTVTLTICMMSMNMFTG). The Lumenal segment spans residues 40–56 (NNKICGWNYECPKFEED). Residues 57–78 (VLSSDIIILTITRCIAILYIYF) form a helical membrane-spanning segment. The SSD domain maps to 61–218 (DIIILTITRC…MTFFPACVSL (158 aa)). Residues 75-78 (YIYF) carry the INSIG-binding motif motif. Residues 79-89 (QFQNLRQLGSK) are Cytoplasmic-facing. Lysine 89 participates in a covalent cross-link: Glycyl lysine isopeptide (Lys-Gly) (interchain with G-Cter in ubiquitin). Residues 90–114 (YILGIAGLFTIFSSFVFSTVVIHFL) form a helical membrane-spanning segment. Residues 115-123 (DKELTGLNE) lie on the Lumenal side of the membrane. The helical transmembrane segment at 124 to 149 (ALPFFLLLIDLSRASALAKFALSSNS) threads the bilayer. Over 150 to 159 (QDEVRENIAR) the chain is Cytoplasmic. A helical membrane pass occupies residues 160–187 (GMAILGPTFTLDALVECLVIGVGTMSGV). Topologically, residues 188-191 (RQLE) are lumenal. A helical membrane pass occupies residues 192 to 220 (IMCCFGCMSVLANYFVFMTFFPACVSLVL). At 221–248 (ELSRESREGRPIWQLSHFARVLEEEENK) the chain is on the cytoplasmic side. Lysine 248 is covalently cross-linked (Glycyl lysine isopeptide (Lys-Gly) (interchain with G-Cter in ubiquitin)). Residues 249–275 (PNPVTQRVKMIMSLGLVLVHAHSRWIA) traverse the membrane as a helical segment. Residues 276 to 314 (DPSPQNSTTEHSKVSLGLDEDVSKRIEPSVSLWQFYLSK) lie on the Lumenal side of the membrane. Asparagine 281 carries an N-linked (GlcNAc...) asparagine glycan. A helical membrane pass occupies residues 315–339 (MISMDIEQVVTLSLAFLLAVKYIFF). At 340-887 (EQAETESTLS…LQGTCTKKSA (548 aa)) the chain is on the cytoplasmic side. Residues glutamate 558, lysine 690, and aspartate 766 each act as charge relay system in the active site. Histidine 865 serves as the catalytic Proton donor. Serine 871 carries the phosphoserine; by AMPK modification.

It belongs to the HMG-CoA reductase family. In terms of assembly, homotetramer. Homodimer. Interacts (via its SSD) with INSIG1; the interaction, accelerated by sterols, leads to the recruitment of HMGCR to AMFR/gp78 for its ubiquitination by the sterol-mediated ERAD pathway. Interacts with UBIAD1. N-glycosylated. Glycosylated with high mannose chains including Man(6)(GlcNAc)(2), Man(7)(GlcNAc)(2) and Man(8)(GlcNAc)(2). Deglycosylated by NGLY1 on release from the endoplasmic reticulum (ER) in a sterol-mediated manner. In terms of processing, undergoes sterol-mediated ubiquitination and ER-associated degradation (ERAD). Accumulation of sterols in the endoplasmic reticulum (ER) membrane, triggers binding of the reductase to the ER membrane protein INSIG1 or INSIG2. The INSIG1 binding leads to the recruitment of the ubiquitin ligase, AMFR/gp78, RNF139 or RNF145, initiating ubiquitination of the reductase. The ubiquitinated reductase is then extracted from the ER membrane and delivered to cytosolic 26S proteosomes by a mechanism probably mediated by the ATPase Valosin-containing protein VCP/p97. The INSIG2-binding leads to the recruitment of the ubiquitin ligase RNF139, initiating ubiquitination of the reductase. Lys-248 is the main site of ubiquitination. Ubiquitination is enhanced by the presence of a geranylgeranylated protein. Post-translationally, phosphorylated. Phosphorylation at Ser-871 reduces the catalytic activity.

It is found in the endoplasmic reticulum membrane. Its subcellular location is the peroxisome membrane. It carries out the reaction (R)-mevalonate + 2 NADP(+) + CoA = (3S)-3-hydroxy-3-methylglutaryl-CoA + 2 NADPH + 2 H(+). It participates in metabolic intermediate biosynthesis; (R)-mevalonate biosynthesis; (R)-mevalonate from acetyl-CoA: step 3/3. Regulated by a negative feedback mechanism through sterols and non-sterol metabolites derived from mevalonate. Phosphorylation at Ser-871 down-regulates the catalytic activity. In terms of biological role, catalyzes the conversion of (3S)-hydroxy-3-methylglutaryl-CoA (HMG-CoA) to mevalonic acid, the rate-limiting step in the synthesis of cholesterol and other isoprenoids, thus plays a critical role in cellular cholesterol homeostasis. In Cricetulus griseus (Chinese hamster), this protein is 3-hydroxy-3-methylglutaryl-coenzyme A reductase (HMGCR).